A 127-amino-acid chain; its full sequence is MDNTLIDPRIIGKHVYGNLYEIPEEIAGDEEYLRNVVVEAAKLANMTLLEVKSWKLGGEKGGVSVIALVLESHIAIHTWINYRYATVDVYTCGEKSDPWRAFNYIVEKLKPKEYTVNYADRTQLLKQ.

The active-site Schiff-base intermediate with substrate; via pyruvic acid is the Ser-72. Ser-72 bears the Pyruvic acid (Ser); by autocatalysis mark. His-77 (proton acceptor; for processing activity) is an active-site residue. Residue Cys-92 is the Proton donor; for catalytic activity of the active site.

It belongs to the prokaryotic AdoMetDC family. Type 1 subfamily. In terms of assembly, heterooctamer of four alpha and four beta chains arranged as a tetramer of alpha/beta heterodimers. Pyruvate serves as cofactor. Is synthesized initially as an inactive proenzyme. Formation of the active enzyme involves a self-maturation process in which the active site pyruvoyl group is generated from an internal serine residue via an autocatalytic post-translational modification. Two non-identical subunits are generated from the proenzyme in this reaction, and the pyruvate is formed at the N-terminus of the alpha chain, which is derived from the carboxyl end of the proenzyme. The post-translation cleavage follows an unusual pathway, termed non-hydrolytic serinolysis, in which the side chain hydroxyl group of the serine supplies its oxygen atom to form the C-terminus of the beta chain, while the remainder of the serine residue undergoes an oxidative deamination to produce ammonia and the pyruvoyl group blocking the N-terminus of the alpha chain.

The catalysed reaction is L-arginine + H(+) = agmatine + CO2. The protein operates within amine and polyamine biosynthesis; agmatine biosynthesis; agmatine from L-arginine: step 1/1. Functionally, specifically catalyzes the decarboxylation of L-arginine to agmatine. Has no S-adenosylmethionine decarboxylase (AdoMetDC) activity. This chain is Arginine decarboxylase proenzyme, found in Staphylothermus marinus (strain ATCC 43588 / DSM 3639 / JCM 9404 / F1).